Consider the following 327-residue polypeptide: Methionyl-tRNA formyltransferase (327 aa).

(6S)-5,6,7,8-tetrahydrofolate is bound at residue 121–124 (SLLP).

The protein belongs to the Fmt family.

It catalyses the reaction L-methionyl-tRNA(fMet) + (6R)-10-formyltetrahydrofolate = N-formyl-L-methionyl-tRNA(fMet) + (6S)-5,6,7,8-tetrahydrofolate + H(+). Functionally, attaches a formyl group to the free amino group of methionyl-tRNA(fMet). The formyl group appears to play a dual role in the initiator identity of N-formylmethionyl-tRNA by promoting its recognition by IF2 and preventing the misappropriation of this tRNA by the elongation apparatus. The protein is Methionyl-tRNA formyltransferase of Burkholderia pseudomallei (strain 1106a).